The primary structure comprises 467 residues: MKQIITRFPPSPTGHLHIGGARTALFNWLYARHTGGRFILRIEDTDVERSTTQSAEGIIKSLEWLGIDWDEGPYFQSRRMEVYAEYIQRLLASGHAYYCTCSPERLKERRERALAEGRNPTYDGTCREKALPPSDDAVVRFRTPDTGKTVLDDRVKGGIAFDNAEIGDFIIQRSDQTPTYNFAVVVDDITMGINTIIRGDDHVTNTPRQILMYRALDSELPLFAHVPMVLGRDRSRLSKRHGAMSVLEYRDTGYLPDGLINALVRLGWSHGDQEFFTRKELIELFSLEHIGTSAGVFDPDKLLAINAEHIKKSDPAALAPHLLPLLKEKGYAAENNDYLHNAIHTLLLRSKTLKEMADKAAFYYEDPLSYDPAATAKFLVPENMEILEMLAEKLATLDSLTEKDQEPAFTAVMEKTGKKFGKIAQPVRVALTGRTESPGIFETIEALGRRKTLERLADAVEMIKKST.

The short motif at 10 to 20 (PSPTGHLHIGG) is the 'HIGH' region element. Zn(2+) contacts are provided by cysteine 99, cysteine 101, cysteine 126, and glutamate 128. Residues 236-240 (RLSKR) carry the 'KMSKS' region motif. Residue lysine 239 participates in ATP binding.

The protein belongs to the class-I aminoacyl-tRNA synthetase family. Glutamate--tRNA ligase type 1 subfamily. As to quaternary structure, monomer. It depends on Zn(2+) as a cofactor.

It is found in the cytoplasm. The catalysed reaction is tRNA(Glu) + L-glutamate + ATP = L-glutamyl-tRNA(Glu) + AMP + diphosphate. In terms of biological role, catalyzes the attachment of glutamate to tRNA(Glu) in a two-step reaction: glutamate is first activated by ATP to form Glu-AMP and then transferred to the acceptor end of tRNA(Glu). The polypeptide is Glutamate--tRNA ligase (Desulfosudis oleivorans (strain DSM 6200 / JCM 39069 / Hxd3) (Desulfococcus oleovorans)).